The sequence spans 69 residues: NAD(P)H-quinone oxidoreductase subunit L (69 aa).

2 consecutive transmembrane segments (helical) span residues 5–25 and 40–60; these read LILLLGLLGGYLLVMPAITYF and GFMYFLVFFFFPSLLLLSPFL.

The protein belongs to the complex I NdhL subunit family. As to quaternary structure, NDH-1 can be composed of about 15 different subunits; different subcomplexes with different compositions have been identified which probably have different functions.

It localises to the cellular thylakoid membrane. The catalysed reaction is a plastoquinone + NADH + (n+1) H(+)(in) = a plastoquinol + NAD(+) + n H(+)(out). It carries out the reaction a plastoquinone + NADPH + (n+1) H(+)(in) = a plastoquinol + NADP(+) + n H(+)(out). In terms of biological role, NDH-1 shuttles electrons from an unknown electron donor, via FMN and iron-sulfur (Fe-S) centers, to quinones in the respiratory and/or the photosynthetic chain. The immediate electron acceptor for the enzyme in this species is believed to be plastoquinone. Couples the redox reaction to proton translocation, and thus conserves the redox energy in a proton gradient. Cyanobacterial NDH-1 also plays a role in inorganic carbon-concentration. The protein is NAD(P)H-quinone oxidoreductase subunit L of Acaryochloris marina (strain MBIC 11017).